Here is a 284-residue protein sequence, read N- to C-terminus: Ribosomal RNA small subunit methyltransferase A (284 aa).

S-adenosyl-L-methionine contacts are provided by N26, L28, G53, E74, D97, and N127.

This sequence belongs to the class I-like SAM-binding methyltransferase superfamily. rRNA adenine N(6)-methyltransferase family. RsmA subfamily.

The protein resides in the cytoplasm. The enzyme catalyses adenosine(1518)/adenosine(1519) in 16S rRNA + 4 S-adenosyl-L-methionine = N(6)-dimethyladenosine(1518)/N(6)-dimethyladenosine(1519) in 16S rRNA + 4 S-adenosyl-L-homocysteine + 4 H(+). Specifically dimethylates two adjacent adenosines (A1518 and A1519) in the loop of a conserved hairpin near the 3'-end of 16S rRNA in the 30S particle. May play a critical role in biogenesis of 30S subunits. This is Ribosomal RNA small subunit methyltransferase A from Anaeromyxobacter dehalogenans (strain 2CP-1 / ATCC BAA-258).